We begin with the raw amino-acid sequence, 184 residues long: MNIRHGIIAMSSTMLVPLAAEAACNTDYSWIDKSCERISDTWKNGDHDLYIPLWTHHLRFAYDNDKIDSFREFTWGLGYGRSRYNAAGNWEGVYLMAFSDSHSNVQPMLGYGHQWMMGPRSGLHAGVGYTAFLTSRADIYKNIPIPGVLPIASLNYRQYSVNTSYVPGGRGNGNILFFWSRVGF.

The first 22 residues, 1–22, serve as a signal peptide directing secretion; it reads MNIRHGIIAMSSTMLVPLAAEA. Catalysis depends on residues His-57, Asp-100, and Ser-101.

The protein belongs to the lipid A palmitoyltransferase family. In terms of assembly, homodimer.

It is found in the cell outer membrane. It carries out the reaction a lipid A + a 1,2-diacyl-sn-glycero-3-phosphocholine = a hepta-acyl lipid A + a 2-acyl-sn-glycero-3-phosphocholine. The enzyme catalyses a lipid IVA + a 1,2-diacyl-sn-glycero-3-phosphocholine = a lipid IVB + a 2-acyl-sn-glycero-3-phosphocholine. It catalyses the reaction a lipid IIA + a 1,2-diacyl-sn-glycero-3-phosphocholine = a lipid IIB + a 2-acyl-sn-glycero-3-phosphocholine. Transfers a fatty acid residue from the sn-1 position of a phospholipid to the N-linked hydroxyfatty acid chain on the proximal unit of lipid A or its precursors. This is Lipid A acyltransferase PagP from Methylobacillus flagellatus (strain ATCC 51484 / DSM 6875 / VKM B-1610 / KT).